Reading from the N-terminus, the 163-residue chain is Phosphopantetheine adenylyltransferase (163 aa).

Ser-8 provides a ligand contact to substrate. ATP-binding positions include 8–9 (SF) and His-16. The substrate site is built by Lys-40, Thr-72, and Arg-86. Residues 87-89 (GLR), Glu-97, and 122-128 (HSFLSSS) contribute to the ATP site.

This sequence belongs to the bacterial CoaD family. Homohexamer. Requires Mg(2+) as cofactor.

The protein localises to the cytoplasm. The catalysed reaction is (R)-4'-phosphopantetheine + ATP + H(+) = 3'-dephospho-CoA + diphosphate. It participates in cofactor biosynthesis; coenzyme A biosynthesis; CoA from (R)-pantothenate: step 4/5. Its function is as follows. Reversibly transfers an adenylyl group from ATP to 4'-phosphopantetheine, yielding dephospho-CoA (dPCoA) and pyrophosphate. The chain is Phosphopantetheine adenylyltransferase from Synechococcus sp. (strain CC9902).